A 429-amino-acid chain; its full sequence is Na(+)/H(+) antiporter NhaA 1 (429 aa).

The next 12 helical transmembrane spans lie at 32–52 (ISGG…NSPW), 73–93 (LSVQ…VAGL), 111–131 (VVPV…YSLL), 140–160 (GWAI…AVVG), 170–190 (FLLT…AVAY), 193–213 (ELSV…TLLV), 219–239 (AWWL…ASGV), 243–263 (VAGV…AGGP), 284–304 (VAVP…LGGL), 316–336 (VVVG…WLVA), 349–369 (WVDV…SLLI), and 383–403 (HVKV…TVVL).

The protein belongs to the NhaA Na(+)/H(+) (TC 2.A.33) antiporter family.

It localises to the cell membrane. It carries out the reaction Na(+)(in) + 2 H(+)(out) = Na(+)(out) + 2 H(+)(in). Na(+)/H(+) antiporter that extrudes sodium in exchange for external protons. The chain is Na(+)/H(+) antiporter NhaA 1 from Frankia alni (strain DSM 45986 / CECT 9034 / ACN14a).